A 218-amino-acid polypeptide reads, in one-letter code: MTHPIIHDLENRYTSKKYDPSKKVSQEDLAVLLEALRLSASSINSQPWKFIVIESDAAKQRMHDSFANMHQFNQPHIKACSHVILFANKLSYTRDDYDVVLSKAVADKRITEEQKEAAFASFKFVELNCDENGEHKAWTKPQAYLALGNALHTLARLNIDSTTMEGIDPELLSEIFADELKGYECHVALAIGYHHPSEDYNASLPKSRKAFEDVITIL.

Residues 12–16 (RYTSK) and N73 contribute to the FMN site. 154–159 (LARLNI) contacts NAD(+). FMN-binding positions include 165-166 (EG) and 206-208 (KSR).

This sequence belongs to the nitroreductase family. In terms of assembly, homodimer. FMN is required as a cofactor.

Functionally, involved in bioluminescence. It is a good supplier of reduced flavin mononucleotide (FMNH2) to the bioluminescence reaction. Major FMN reductase. It is capable of using both NADH and NADPH as electron donors. As electron acceptor, FMN is the most effective, FAD is considerably effective, and riboflavin is the least effective. The polypeptide is Major NAD(P)H-flavin oxidoreductase (Aliivibrio fischeri (Vibrio fischeri)).